We begin with the raw amino-acid sequence, 78 residues long: RNA-binding protein Hfq (78 aa).

The region spanning 10–69 (DPFLNTLRKEHVPVSIYLVNGIKLQGQIESFDQYVVLLRNTVTQMVYKHAISTVVPARAV) is the Sm domain.

This sequence belongs to the Hfq family. As to quaternary structure, homohexamer.

RNA chaperone that binds small regulatory RNA (sRNAs) and mRNAs to facilitate mRNA translational regulation in response to envelope stress, environmental stress and changes in metabolite concentrations. Also binds with high specificity to tRNAs. In Bordetella avium (strain 197N), this protein is RNA-binding protein Hfq.